The primary structure comprises 224 residues: 7-cyano-7-deazaguanine synthase (224 aa).

12 to 22 contacts ATP; that stretch reads LSGGLDSSTVT. Residues Cys193, Cys201, Cys204, and Cys207 each contribute to the Zn(2+) site.

Belongs to the QueC family. It depends on Zn(2+) as a cofactor.

The enzyme catalyses 7-carboxy-7-deazaguanine + NH4(+) + ATP = 7-cyano-7-deazaguanine + ADP + phosphate + H2O + H(+). The protein operates within purine metabolism; 7-cyano-7-deazaguanine biosynthesis. Catalyzes the ATP-dependent conversion of 7-carboxy-7-deazaguanine (CDG) to 7-cyano-7-deazaguanine (preQ(0)). The protein is 7-cyano-7-deazaguanine synthase of Prochlorococcus marinus subsp. pastoris (strain CCMP1986 / NIES-2087 / MED4).